A 348-amino-acid polypeptide reads, in one-letter code: N6-Methyl-AMP deaminase (348 aa).

Residues H18 and H20 each coordinate Zn(2+). N(6)-methyl-AMP-binding positions include H20, N22, H68, 100-103 (STPR), D142, and G175. H202 contacts Zn(2+). Residues E205, D287, and D288 each contribute to the N(6)-methyl-AMP site. Residue E205 is the Proton donor of the active site. A Zn(2+)-binding site is contributed by D287.

It belongs to the metallo-dependent hydrolases superfamily. Adenosine and AMP deaminases family. Monomer. Requires Zn(2+) as cofactor.

It catalyses the reaction N(6)-methyl-AMP + H2O + H(+) = IMP + methylamine. Functionally, catalyzes the hydrolysis of the free cytosolic methylated adenosine nucleotide N(6)-methyl-AMP (N6-mAMP) to produce inositol monophosphate (IMP) and methylamine. Is required for the catabolism of cytosolic N6-mAMP, which is derived from the degradation of mRNA containing N6-methylated adenine (m6A). The protein is N6-Methyl-AMP deaminase (mapda) of Danio rerio (Zebrafish).